Reading from the N-terminus, the 485-residue chain is Probable phosphomannomutase (485 aa).

Serine 86 serves as the catalytic Phosphoserine intermediate. Positions 86, 236, 238, and 240 each coordinate Mg(2+).

Belongs to the phosphohexose mutase family. The cofactor is Mg(2+).

The catalysed reaction is alpha-D-mannose 1-phosphate = D-mannose 6-phosphate. The protein is Probable phosphomannomutase of Haemophilus influenzae (strain ATCC 51907 / DSM 11121 / KW20 / Rd).